A 613-amino-acid chain; its full sequence is Zinc metalloproteinase-disintegrin-like VMP-III (613 aa).

An N-terminal signal peptide occupies residues 1-20 (MIQVLLVTLCLAAFPYQGSS). The propeptide occupies 21-190 (IILDSGNVND…KKASQLVVTP (170 aa)). In terms of domain architecture, Peptidase M12B spans 200-396 (KYIELVIVAD…NRPPCILNKP (197 aa)). Glu-203 is a binding site for Ca(2+). Asn-219 carries N-linked (GlcNAc...) asparagine glycosylation. Asp-287 lines the Ca(2+) pocket. Cystine bridges form between Cys-311–Cys-391, Cys-351–Cys-375, and Cys-353–Cys-358. His-336 is a Zn(2+) binding site. Glu-337 is a catalytic residue. The Zn(2+) site is built by His-340 and His-346. Residues Cys-391, Asn-394, Val-406, Asn-409, Phe-411, Glu-413, Glu-416, and Asp-419 each coordinate Ca(2+). Residues 404-490 (PPVCGNYFVE…ECPTDDFQRN (87 aa)) enclose the Disintegrin domain. Disulfide bonds link Cys-407-Cys-436, Cys-418-Cys-431, Cys-420-Cys-426, Cys-430-Cys-453, Cys-444-Cys-450, Cys-449-Cys-475, Cys-462-Cys-482, Cys-469-Cys-501, Cys-494-Cys-506, Cys-513-Cys-563, Cys-528-Cys-574, Cys-541-Cys-551, Cys-558-Cys-600, and Cys-594-Cys-606. The D/ECD-tripeptide motif lies at 468–470 (ECD). Asn-503 carries an N-linked (GlcNAc...) asparagine glycan.

It belongs to the venom metalloproteinase (M12B) family. P-III subfamily. P-IIIa sub-subfamily. Monomer. Zn(2+) is required as a cofactor. In terms of tissue distribution, expressed by the venom gland.

It is found in the secreted. Snake venom metalloproteinase that impairs hemostasis in the envenomed animal. The polypeptide is Zinc metalloproteinase-disintegrin-like VMP-III (Agkistrodon piscivorus leucostoma (Western cottonmouth)).